Reading from the N-terminus, the 782-residue chain is MTSIIKLTTLSGVQEESALCYLLQVDEFRFLLDCGWDEHFSMDIIDSLRKHVHQIDAVLLSHPDPLHLGALPYAVGKLGLNCAIYATIPVYKMGQMFMYDLYQSRHNTEDFTLFTLDDVDAAFDKIQQLKFSQIVNLKGKGHGLSITPLPAGHMIGGTIWKIVKDGEEEIVYAVDFNHKREIHLNGCSLEMLSRPSLLITDSFNATYVQPRRKQRDEQLLTNVLETLRGDGNVLIAVDTAGRVLELAQLLDQIWRTKDAGLGVYSLALLNNVSYNVVEFSKSQVEWMSDKLMRCFEDKRNNPFQFRHLSLCHGLSDLARVPSPKVVLASQPDLECGFSRDLFIQWCQDPKNSIILTYRTTPGTLARFLIDNPSEKVTEIELRKRVKLEGKELEEYLEKEKLKKEAAKKLEQSKEADIDSSDESDAEEDIDQPSAHKTKHDLMMKGEGSRKGSFFKQAKKSYPMFPAPEERIKWDEYGEIIKPEDFLVPELQATEEEKSKLESGLTNGDEPMDQDLSDVPTKCISTTESIEIKARVTYIDYEGRSDGDSIKKIINQMKPRQLIIVHGPPEASQDLAECCRAFGGKDIKVYMPKLHETVDATSETHIYQVRLKDSLVSSLQFCKAKDAELAWIDGVLDMRVSKVDTGVILEEGELKDDGEDSEMQVDAPSDSSVIAQQKAMKSLFGDDEKETGEESEIIPTLEPLPPHEVPGHQSVFMNEPRLSDFKQVLLREGIQAEFVGGVLVCNNQVAVRRTETGRIGLEGCLCQDFYRIRDLLYEQYAIV.

A compositionally biased stretch (basic and acidic residues) spans 407 to 416 (KKLEQSKEAD). The tract at residues 407–452 (KKLEQSKEADIDSSDESDAEEDIDQPSAHKTKHDLMMKGEGSRKGS) is disordered. Residues 417–430 (IDSSDESDAEEDID) are compositionally biased toward acidic residues. Residues Ser419, Ser420, and Ser423 each carry the phosphoserine modification. Residues 439–449 (HDLMMKGEGSR) show a composition bias toward basic and acidic residues. Ser660 bears the Phosphoserine mark.

Belongs to the metallo-beta-lactamase superfamily. RNA-metabolizing metallo-beta-lactamase-like family. CPSF2/YSH1 subfamily. As to quaternary structure, component of the cleavage and polyadenylation specificity factor (CPSF) complex, composed of CPSF1, CPSF2, CPSF3, CPSF4 and FIP1L1. Interacts with CPSF3, CSTF2 and SYMPK. Interacts with ZC3H3.

The protein localises to the nucleus. Functionally, component of the cleavage and polyadenylation specificity factor (CPSF) complex that play a key role in pre-mRNA 3'-end formation, recognizing the AAUAAA signal sequence and interacting with poly(A) polymerase and other factors to bring about cleavage and poly(A) addition. Involved in the histone 3' end pre-mRNA processing. In Bos taurus (Bovine), this protein is Cleavage and polyadenylation specificity factor subunit 2 (CPSF2).